Reading from the N-terminus, the 1669-residue chain is Collagen alpha-3(IV) chain (1669 aa).

A signal peptide spans methionine 1–serine 28. Residues lysine 29–alanine 42 are 7S domain. The triple-helical region stretch occupies residues glycine 43–proline 1436. 2 disordered regions span residues threonine 44–serine 473 and proline 500–glycine 1439. Positions proline 54 to proline 68 are enriched in low complexity. A compositionally biased stretch (pro residues) spans proline 105 to proline 114. N-linked (GlcNAc...) asparagine glycosylation is present at asparagine 126. The segment covering proline 188–proline 200 has biased composition (pro residues). Over residues phenylalanine 202–proline 211 the composition is skewed to low complexity. N-linked (GlcNAc...) asparagine glycosylation is present at asparagine 253. Positions serine 255–glutamate 269 are enriched in basic and acidic residues. 2 stretches are compositionally biased toward low complexity: residues proline 279 to proline 290 and serine 382 to proline 393. A compositionally biased stretch (pro residues) spans proline 416–cysteine 437. Residues asparagine 551 to leucine 560 are compositionally biased toward low complexity. 2 stretches are compositionally biased toward pro residues: residues proline 596–tyrosine 617 and leucine 654–glutamine 665. Residues alanine 666 to glycine 684 show a composition bias toward low complexity. Positions glycine 778–glycine 787 are enriched in gly residues. The Cell attachment site motif lies at arginine 830–aspartate 832. A compositionally biased stretch (low complexity) spans cysteine 861–alanine 876. The span at lysine 922–lysine 939 shows a compositional bias: basic and acidic residues. Residues arginine 970 to proline 985 are compositionally biased toward low complexity. The Cell attachment site signature appears at arginine 994–aspartate 996. Positions serine 1092 to serine 1103 are enriched in low complexity. Positions proline 1128 to proline 1146 are enriched in pro residues. Residues arginine 1152 to aspartate 1154 carry the Cell attachment site motif. The segment covering proline 1228 to proline 1248 has biased composition (low complexity). A compositionally biased stretch (pro residues) spans glutamate 1250 to proline 1259. A Cell attachment site motif is present at residues arginine 1304–aspartate 1306. Residues proline 1333 to arginine 1343 are compositionally biased toward pro residues. Composition is skewed to low complexity over residues glutamine 1366–proline 1379 and proline 1402–asparagine 1429. Residues glycine 1425–arginine 1443 are epitope recognized by Goodpasture antibodies. In terms of domain architecture, Collagen IV NC1 spans glycine 1444 to arginine 1668. Disulfide bonds link cysteine 1459-cysteine 1550, cysteine 1492-cysteine 1547, cysteine 1504-cysteine 1510, cysteine 1569-cysteine 1664, cysteine 1603-cysteine 1661, and cysteine 1615-cysteine 1621. A required for the anti-angiogenic activity of tumstatin region spans residues asparagine 1478–alanine 1556. Methionine 1532 is covalently cross-linked (S-Lysyl-methionine sulfilimine (Met-Lys) (interchain with K-1650)). Residues alanine 1609–serine 1627 are required for the anti-tumor cell activity of tumstatin. Lysine 1650 participates in a covalent cross-link: S-Lysyl-methionine sulfilimine (Lys-Met) (interchain with M-1532).

Belongs to the type IV collagen family. In terms of assembly, there are six type IV collagen isoforms, alpha 1(IV)-alpha 6(IV), each of which can form a triple helix structure with 2 other chains to generate type IV collagen network. The alpha 3(IV) chain forms a triple helical protomer with alpha 4(IV) and alpha 5(IV); this triple helical structure dimerizes through NC1-NC1 domain interactions such that the alpha 3(IV), alpha 4(IV) and alpha 5(IV) chains of one protomer connect with the alpha 5(IV), alpha 4(IV) and alpha 3(IV) chains of the opposite promoter, respectively. Interacts with ITGB3. Associates with LAMB2 at the neuromuscular junction and in GBM. Prolines at the third position of the tripeptide repeating unit (G-X-Y) are hydroxylated in some or all of the chains. In terms of processing, type IV collagens contain numerous cysteine residues which are involved in inter- and intramolecular disulfide bonding. 12 of these, located in the NC1 domain, are conserved in all known type IV collagens. Post-translationally, the trimeric structure of the NC1 domains is stabilized by covalent bonds between Lys and Met residues. Phosphorylated. Thought to be phosphorylated by CERT, but CERT does not have kinase activity. Highly expressed in kidney and lung. Detected at lower levels in heart, muscle and skin.

Its subcellular location is the secreted. The protein resides in the extracellular space. It localises to the extracellular matrix. The protein localises to the basement membrane. Type IV collagen is the major structural component of glomerular basement membranes (GBM), forming a 'chicken-wire' meshwork together with laminins, proteoglycans and entactin/nidogen. In terms of biological role, tumstatin, a cleavage fragment corresponding to the collagen alpha 3(IV) NC1 domain, possesses both anti-angiogenic and anti-tumor cell activity; these two anti-tumor properties may be regulated via RGD-independent ITGB3-mediated mechanisms. The sequence is that of Collagen alpha-3(IV) chain from Mus musculus (Mouse).